A 186-amino-acid chain; its full sequence is Small ribosomal subunit protein uS7 (186 aa).

The protein belongs to the universal ribosomal protein uS7 family. In terms of assembly, part of the 30S ribosomal subunit.

Functionally, one of the primary rRNA binding proteins, it binds directly to 16S rRNA where it nucleates assembly of the head domain of the 30S subunit. Is located at the subunit interface close to the decoding center. The chain is Small ribosomal subunit protein uS7 from Methanothermobacter thermautotrophicus (strain ATCC 29096 / DSM 1053 / JCM 10044 / NBRC 100330 / Delta H) (Methanobacterium thermoautotrophicum).